Consider the following 222-residue polypeptide: Histone H1.5 (222 aa).

Positions 1–16 (MSETAPAETTAPAPVE) are enriched in low complexity. Residues 1–55 (MSETAPAETTAPAPVEKSPAKKKTKKAGAAKRKATGPPVSELITKAVSASKERGG) form a disordered region. The residue at position 2 (serine 2) is an N-acetylserine. Serine 2 bears the Phosphoserine mark. N6-acetyllysine is present on lysine 17. Serine 18 bears the Phosphoserine mark. Basic residues predominate over residues 20–34 (AKKKTKKAGAAKRKA). Lysine 26 is modified (N6-methyllysine). Position 33 is an N6-(beta-hydroxybutyryl)lysine; alternate (lysine 33). Lysine 33 bears the N6-succinyllysine; alternate mark. Threonine 35 bears the Phosphothreonine mark. Residues 35–108 (TGPPVSELIT…GASGSFKLNK (74 aa)) form the H15 domain. Residue lysine 45 is modified to N6-acetyllysine. Residue lysine 51 is modified to N6-(beta-hydroxybutyryl)lysine. Residue arginine 53 is modified to Citrulline. Lysine 63 bears the N6-(beta-hydroxybutyryl)lysine mark. Lysine 74 is modified (N6-acetyllysine). Residues lysine 84, lysine 89, and lysine 105 each carry the N6-(beta-hydroxybutyryl)lysine modification. The interval 94-222 (QTKGTGASGS…KVKKAVSKKK (129 aa)) is disordered. Over residues 118 to 129 (KAKKTGAAKAKK) the composition is skewed to basic residues. Threonine 134 and threonine 151 each carry phosphothreonine. Positions 136-157 (KKPKKTAGAKKTVKKTPKKAKK) are enriched in basic residues. Lysine 164 carries the post-translational modification N6-acetyllysine. Residues 165–183 (KVTKSPKKAKAAAKPKKAT) show a composition bias toward basic residues. 2 positions are modified to phosphoserine: serine 169 and serine 185. A compositionally biased stretch (basic residues) spans 190–222 (KAVKSKASKPKVTKPKAAKPKAAKVKKAVSKKK).

It belongs to the histone H1/H5 family. As to quaternary structure, interacts with MSX1. H1 histones are progressively phosphorylated during the cell cycle, becoming maximally phosphorylated during late G2 phase and M phase, and being dephosphorylated sharply thereafter. Post-translationally, citrullination at Arg-53 (H1R54ci) by PADI4 takes place within the DNA-binding site of H1 and results in its displacement from chromatin and global chromatin decondensation, thereby promoting pluripotency and stem cell maintenance.

It localises to the nucleus. It is found in the chromosome. Functionally, histone H1 protein binds to linker DNA between nucleosomes forming the macromolecular structure known as the chromatin fiber. Histones H1 are necessary for the condensation of nucleosome chains into higher-order structured fibers. Also acts as a regulator of individual gene transcription through chromatin remodeling, nucleosome spacing and DNA methylation. The polypeptide is Histone H1.5 (H1-5) (Rattus norvegicus (Rat)).